The chain runs to 212 residues: MTLIAVIDYDMGNLHSACKGLETVGAVPKITDSPLDLEKADAIVLPGVGSFDPAVRQIRSRHLEKPIKAAIANGKPFLGICLGLQILFETSEEGQEAGLGIIPGTVRRFRSEPGITIPHMGWNQLDFTQPDHALWQGLPPHPHVYFVHSYYVDPLDSHLTAATVTHGSQTVTAAIARDRLVAVQFHPEKSSTNGLKILANFVQQVQKLALVS.

The Glutamine amidotransferase type-1 domain maps to 3-211 (LIAVIDYDMG…VQQVQKLALV (209 aa)). Cysteine 81 (nucleophile) is an active-site residue. Residues histidine 186 and glutamate 188 contribute to the active site.

In terms of assembly, heterodimer of HisH and HisF.

The protein resides in the cytoplasm. It catalyses the reaction 5-[(5-phospho-1-deoxy-D-ribulos-1-ylimino)methylamino]-1-(5-phospho-beta-D-ribosyl)imidazole-4-carboxamide + L-glutamine = D-erythro-1-(imidazol-4-yl)glycerol 3-phosphate + 5-amino-1-(5-phospho-beta-D-ribosyl)imidazole-4-carboxamide + L-glutamate + H(+). The catalysed reaction is L-glutamine + H2O = L-glutamate + NH4(+). It participates in amino-acid biosynthesis; L-histidine biosynthesis; L-histidine from 5-phospho-alpha-D-ribose 1-diphosphate: step 5/9. Its function is as follows. IGPS catalyzes the conversion of PRFAR and glutamine to IGP, AICAR and glutamate. The HisH subunit catalyzes the hydrolysis of glutamine to glutamate and ammonia as part of the synthesis of IGP and AICAR. The resulting ammonia molecule is channeled to the active site of HisF. This chain is Imidazole glycerol phosphate synthase subunit HisH, found in Microcystis aeruginosa (strain NIES-843 / IAM M-2473).